The chain runs to 335 residues: Tryptophan--tRNA ligase (335 aa).

Residues 19 to 21 (QPS) and 28 to 29 (GN) each bind ATP. A 'HIGH' region motif is present at residues 20 to 29 (PSSGMLHLGN). Asp-143 provides a ligand contact to L-tryptophan. ATP contacts are provided by residues 155–157 (GAD), Ile-192, and 201–205 (KMSKS). The short motif at 201–205 (KMSKS) is the 'KMSKS' region element.

The protein belongs to the class-I aminoacyl-tRNA synthetase family. In terms of assembly, homodimer.

The protein resides in the cytoplasm. The enzyme catalyses tRNA(Trp) + L-tryptophan + ATP = L-tryptophyl-tRNA(Trp) + AMP + diphosphate + H(+). Functionally, catalyzes the attachment of tryptophan to tRNA(Trp). This chain is Tryptophan--tRNA ligase, found in Tropheryma whipplei (strain TW08/27) (Whipple's bacillus).